A 189-amino-acid polypeptide reads, in one-letter code: UPF0688 protein C1orf174 homolog (189 aa).

Residues 53–137 form a disordered region; that stretch reads QMAGDGGEAK…TTDPSVFFDE (85 aa). Composition is skewed to basic and acidic residues over residues 59-73 and 93-103; these read GEAK…HGEV and APGERRGKENS.

It belongs to the UPF0688 family.

The protein localises to the nucleus. This is UPF0688 protein C1orf174 homolog from Danio rerio (Zebrafish).